Here is a 395-residue protein sequence, read N- to C-terminus: Digeranylgeranylglycerophospholipid reductase (395 aa).

Alanine 15, aspartate 34, cysteine 45, alanine 46, alanine 48, arginine 97, alanine 121, aspartate 276, and glycine 288 together coordinate FAD. Arginine 329 lines the a 2,3-bis-O-(geranylgeranyl)-sn-glycerol 1-phospholipid pocket.

This sequence belongs to the geranylgeranyl reductase family. DGGGPL reductase subfamily. The cofactor is FAD.

It catalyses the reaction a 2,3-bis-O-phytanyl-sn-glycerol 1-phospholipid + 8 A = a 2,3-bis-O-(geranylgeranyl)-sn-glycerol 1-phospholipid + 8 AH2. The enzyme catalyses 2,3-bis-O-(phytanyl)-sn-glycerol 1-phosphate + 8 A = 2,3-bis-O-(geranylgeranyl)-sn-glycerol 1-phosphate + 8 AH2. The catalysed reaction is CDP-2,3-bis-O-(geranylgeranyl)-sn-glycerol + 8 AH2 = CDP-2,3-bis-O-(phytanyl)-sn-glycerol + 8 A. It carries out the reaction archaetidylserine + 8 AH2 = 2,3-bis-O-phytanyl-sn-glycero-3-phospho-L-serine + 8 A. It functions in the pathway membrane lipid metabolism; glycerophospholipid metabolism. Is involved in the reduction of 2,3-digeranylgeranylglycerophospholipids (unsaturated archaeols) into 2,3-diphytanylglycerophospholipids (saturated archaeols) in the biosynthesis of archaeal membrane lipids. Catalyzes the formation of archaetidic acid (2,3-di-O-phytanyl-sn-glyceryl phosphate) from 2,3-di-O-geranylgeranylglyceryl phosphate (DGGGP) via the hydrogenation of each double bond of the isoprenoid chains. Is also probably able to reduce double bonds of geranyl groups in CDP-2,3-bis-O-(geranylgeranyl)-sn-glycerol and archaetidylserine, thus acting at various stages in the biosynthesis of archaeal membrane lipids. The protein is Digeranylgeranylglycerophospholipid reductase of Thermococcus kodakarensis (strain ATCC BAA-918 / JCM 12380 / KOD1) (Pyrococcus kodakaraensis (strain KOD1)).